The chain runs to 500 residues: MVDVEKMSDAELRAELNVRGANVGPVTGTTRSLYEKKLKKLLSGGAKTPARPTVAKPAPKPTPKSAPAPKSPKSPPARRSIPRAAATAANSTINSTFNRSEIEEMSDSDDDMRDDDDDDEEILSPKSKQSSFRSANSTASSVGRGRPVSSTPNKRLSPVYKPSPVPKNTPRTTSSSSKTTINTTTTRIPSTPRRITSVPGLITDFTPSFSTFGSDRPGATPPRKSIYTSKVSKVLHDLGNTTGEEDDDDEFEGQETSRIIYKTEEPSRRGIVKNAWNKVLGYGFDASKNPGDSYDLRAGASRIRVQKNPRTGKVTVKQTNIFNEAIYFALYVILILFVVLGIAYALTTTHRPKTADFSGYWGVLKAAGRDSLNFFYNYAILPVVSLGIFVVLGAGIYFGHRKYKEAKEQEEAKLYELIERITELIRESSIDGDPYVSQPHVRDVLFPPAKRRSAELARWEQAVKFIDTNESRVATDVLVLPSGNECAVWKWIGNQSQKRW.

The LEM domain maps to M1 to G45. Over M1–A325 the chain is Nuclear. The tract at residues K39–I202 is disordered. A compositionally biased stretch (low complexity) spans A46–P57. The span at A58–P75 shows a compositional bias: pro residues. A compositionally biased stretch (low complexity) spans A77–A89. Over residues E103–I122 the composition is skewed to acidic residues. 2 stretches are compositionally biased toward low complexity: residues S130–S141 and N168–S197. A helical membrane pass occupies residues I326–L346. Residues T347–Y378 are Perinuclear space-facing. A helical transmembrane segment spans residues A379–G399. At H400 to W500 the chain is on the nuclear side.

In terms of assembly, interacts with lmn-1. Interacts (via LEM domain and the C-terminal nuclear domain) with baf-1. As to expression, ubiquitous. High expression in germline and intestine.

The protein resides in the nucleus inner membrane. It localises to the nucleus envelope. The protein localises to the chromosome. Functionally, nuclear lamina-associated inner nuclear membrane protein that is involved in cell division, nuclear structure organization, maintenance of nuclear envelope integrity and nuclear envelope reformation after mitosis. In interphase cells, plays a role in anchoring and spatial arrangement of chromosome arms at the nuclear periphery, forming so-called lem-2 subdomains. Both arms of autosomes but only the left arm of the X chromosome are anchored in lem-2 subdomains; sequences bound by lem-2 are mainly repetitive chromosome sequences and inactive genes. Involved in chromosome segregation and cell division, probably via its interaction with the nuclear intermediate filament protein lmn-1, the main component of nuclear lamina. Required to organize the distribution of lmn-1, nuclear pore complexes (NPCs) and chromatin in mitotically active cells. Involved in the nuclear positioning and efficient anchoring of microtubule-organizing centers (MTOCs) to the nuclear envelope during mitosis as well as on maintaining correct nuclear morphology. Contributes to closure of nuclear envelope (NE) holes and prevents excess nuclear membranes after meiosis and mitosis. Together with emr-1, plays a role in baf-1 enrichment at the nuclear envelope in anaphase. Together with emr-1, involved in muscle cell attachment to hypodermal cells, as well as muscle cell location and sarcomere organization. May play a role in radiation-induced DNA damage repair response. The polypeptide is LEM protein 2 (lem-2) (Caenorhabditis elegans).